The primary structure comprises 337 residues: MVVKVGINGFGRIGRIVFRNAHEHSDVEIVAVNDPFIEPHYAAYMLKYDSQHGNFKGDVTVEGSDLVVGGKKVRFYTERDPAAIPWSETGADYIVESTGVFTTTEKAKAHLKGGAKKVIISAPSADAPMYVMGVNEKTYDGSGMVISNASCTTNCLAPLAKVINDEFKIIEGLMTTVHSYTATQKTVDGPSAKDWRGGRTAAQNIIPSSTGAAKAVGKVIPELNGKLTGMSMRVPTSNVSVVDLTVRIEKGATYEQIKTAVKKAADGPLKGVLAYTEDDVVSTDMNGNPNSSIFDAKAGISLNDHFVKLVSWYDNEWGYSRRVLDLISHVAKVDGNA.

NAD(+) is bound by residues 12–13, aspartate 34, and arginine 79; that span reads RI. D-glyceraldehyde 3-phosphate is bound by residues 150–152, threonine 181, 210–211, and arginine 233; these read SCT and TG. Cysteine 151 serves as the catalytic Nucleophile. Asparagine 315 contacts NAD(+).

It belongs to the glyceraldehyde-3-phosphate dehydrogenase family. In terms of assembly, homotetramer.

It localises to the cytoplasm. It carries out the reaction D-glyceraldehyde 3-phosphate + phosphate + NAD(+) = (2R)-3-phospho-glyceroyl phosphate + NADH + H(+). It functions in the pathway carbohydrate degradation; glycolysis; pyruvate from D-glyceraldehyde 3-phosphate: step 1/5. The sequence is that of Glyceraldehyde-3-phosphate dehydrogenase from Cryphonectria parasitica (Chestnut blight fungus).